Here is a 172-residue protein sequence, read N- to C-terminus: C-phycocyanin beta chain (172 aa).

Asn-72 is modified (N4-methylasparagine). (2R,3E)-phycocyanobilin is bound by residues Cys-82 and Cys-153.

The protein belongs to the phycobiliprotein family. Heterodimer of an alpha and a beta subunit, which further assembles into trimers and the trimers into hexamers. The basic functional unit of phycobiliproteins is a ring-shaped hexamer formed from two back-to-back trimers contacting via the alpha chain subunits. The trimers are composed of alpha/beta subunit heterodimers arranged around a three-fold axis of symmetry. The phycoerythrins also contain a gamma subunit which is located in the center of the hexamer. Post-translationally, contains two covalently linked bilin chromophores.

Its subcellular location is the plastid. It is found in the chloroplast thylakoid membrane. Light-harvesting photosynthetic bile pigment-protein from the phycobiliprotein complex (phycobilisome, PBS). Phycocyanin is the major phycobiliprotein in the PBS rod. This Aglaothamnion neglectum (Red alga) protein is C-phycocyanin beta chain (cpcB).